Here is a 650-residue protein sequence, read N- to C-terminus: 1-deoxy-D-xylulose-5-phosphate synthase (650 aa).

Thiamine diphosphate contacts are provided by residues His-73 and 113 to 115; that span reads SHA. Asp-145 contacts Mg(2+). Thiamine diphosphate is bound by residues 146–147, Asn-175, Tyr-287, and Glu-369; that span reads GA. Asn-175 serves as a coordination point for Mg(2+). A disordered region spans residues 629-650; that stretch reads SARPLPEDAERVPMRAEDDEQA. The segment covering 633-644 has biased composition (basic and acidic residues); the sequence is LPEDAERVPMRA.

Belongs to the transketolase family. DXPS subfamily. In terms of assembly, homodimer. Requires Mg(2+) as cofactor. It depends on thiamine diphosphate as a cofactor.

The enzyme catalyses D-glyceraldehyde 3-phosphate + pyruvate + H(+) = 1-deoxy-D-xylulose 5-phosphate + CO2. It functions in the pathway metabolic intermediate biosynthesis; 1-deoxy-D-xylulose 5-phosphate biosynthesis; 1-deoxy-D-xylulose 5-phosphate from D-glyceraldehyde 3-phosphate and pyruvate: step 1/1. Functionally, catalyzes the acyloin condensation reaction between C atoms 2 and 3 of pyruvate and glyceraldehyde 3-phosphate to yield 1-deoxy-D-xylulose-5-phosphate (DXP). This Clavibacter sepedonicus (Clavibacter michiganensis subsp. sepedonicus) protein is 1-deoxy-D-xylulose-5-phosphate synthase.